Here is a 134-residue protein sequence, read N- to C-terminus: Histone H2A (134 aa).

The segment covering 1–11 (MTGGGKSGGKA) has biased composition (gly residues). A disordered region spans residues 1-24 (MTGGGKSGGKASGSKNAQSRSSKA). 2 positions are modified to N6-acetyllysine: K6 and K10. N5-methylglutamine is present on Q107.

This sequence belongs to the histone H2A family. The nucleosome is a histone octamer containing two molecules each of H2A, H2B, H3 and H4 assembled in one H3-H4 heterotetramer and two H2A-H2B heterodimers. The octamer wraps approximately 147 bp of DNA. Acetylated by ESA1 to form H2AK4ac and H2AK7ac.

Its subcellular location is the nucleus. The protein resides in the chromosome. Its function is as follows. Core component of nucleosome. Nucleosomes wrap and compact DNA into chromatin, limiting DNA accessibility to the cellular machineries which require DNA as a template. Histones thereby play a central role in transcription regulation, DNA repair, DNA replication and chromosomal stability. DNA accessibility is regulated via a complex set of post-translational modifications of histones, also called histone code, and nucleosome remodeling. The chain is Histone H2A (HTA1) from Gibberella zeae (strain ATCC MYA-4620 / CBS 123657 / FGSC 9075 / NRRL 31084 / PH-1) (Wheat head blight fungus).